Here is a 47-residue protein sequence, read N- to C-terminus: Delta-actitoxin-Axm1e (47 aa).

Cystine bridges form between Cys-4-Cys-44, Cys-6-Cys-34, and Cys-27-Cys-45.

Belongs to the sea anemone sodium channel inhibitory toxin family. Type I subfamily.

It is found in the secreted. The protein resides in the nematocyst. Its function is as follows. Binds specifically to voltage-gated sodium channels (Nav), thereby delaying their inactivation. This toxin is active on a variety of voltage-gated sodium channels (Nav1.1/SCN1A, Nav1.2/SCN2A, Nav1.3/SCN3A, Nav1.4/SCN4A, Nav1.5/SCN5A and Nav1.6/SCN8A). This Anthopleura xanthogrammica (Giant green sea anemone) protein is Delta-actitoxin-Axm1e.